The chain runs to 581 residues: AP2-like ethylene-responsive transcription factor AIL6 (581 aa).

2 disordered regions span residues 105–132 and 205–240; these read VRYSDNSQTDTQDSSLTQIYDPRHHHNQ and NNTNHRNDNDNHYRGNNNGERINNNNNNDNEKTDSE. Low complexity-rich tracts occupy residues 108–122 and 218–232; these read SDNSQTDTQDSSLTQ and RGNNNGERINNNNNN. DNA-binding regions (AP2/ERF) lie at residues 268–331 and 367–425; these read IYRG…TNFP and IYRG…TNFE.

The protein belongs to the AP2/ERF transcription factor family. AP2 subfamily. Expressed in roots, seedlings, hypocotyl, inflorescence, siliques, and pistils. Also detected at low levels in leaves.

It localises to the nucleus. Functionally, probably acts as a transcriptional activator. Binds to the GCC-box pathogenesis-related promoter element. May be involved in the regulation of gene expression by stress factors and by components of stress signal transduction pathways. The protein is AP2-like ethylene-responsive transcription factor AIL6 of Arabidopsis thaliana (Mouse-ear cress).